Consider the following 94-residue polypeptide: Small ribosomal subunit protein bS18c (94 aa).

Belongs to the bacterial ribosomal protein bS18 family. In terms of assembly, part of the 30S ribosomal subunit.

Its subcellular location is the plastid. It localises to the chloroplast. The polypeptide is Small ribosomal subunit protein bS18c (Manihot esculenta (Cassava)).